The chain runs to 378 residues: Opsin Rh4 (378 aa).

At 1-53 the chain is on the extracellular side; it reads MEPLCNASEPPLRPEARSSGNGDLQFLGWNVPPDQIQYIPEHWLTQLEPPASM. N6 carries N-linked (GlcNAc...) asparagine glycosylation. A helical transmembrane segment spans residues 54-78; that stretch reads HYMLGVFYIFLFCASTVGNGMVIWI. Topologically, residues 79–90 are cytoplasmic; the sequence is FSTSKSLRTPSN. Residues 91-111 traverse the membrane as a helical segment; sequence MFVLNLAVFDLIMCLKAPIFI. The Extracellular portion of the chain corresponds to 112–127; that stretch reads YNSFHRGFALGNTWCQ. An intrachain disulfide couples C126 to C203. The helical transmembrane segment at 128–148 threads the bilayer; sequence IFASIGSYSGIGAGMTNAAIG. The Cytoplasmic segment spans residues 149 to 167; it reads YDRYNVITKPMNRNMTFTK. A helical membrane pass occupies residues 168-192; sequence AVIMNIIIWLYCTPWVVLPLTQFWD. Residues 193–216 are Extracellular-facing; the sequence is RFVPEGYLTSCSFDYLSDNFDTRL. A helical transmembrane segment spans residues 217–244; the sequence is FVGTIFFFSFVCPTLMILYYYSQIVGHV. Topologically, residues 245-280 are cytoplasmic; the sequence is FSHEKALREQAKKMNVESLRSNVDKSKETAEIRIAK. A helical transmembrane segment spans residues 281–304; the sequence is AAITICFLFFVSWTPYGVMSLIGA. At 305 to 312 the chain is on the extracellular side; that stretch reads FGDKSLLT. Residues 313–337 traverse the membrane as a helical segment; that stretch reads PGATMIPACTCKLVACIDPFVYAIS. Residue K324 is modified to N6-(retinylidene)lysine. Topologically, residues 338–378 are cytoplasmic; the sequence is HPRYRLELQKRCPWLGVNEKSGEISSAQSTTTQEQQQTTAA.

It belongs to the G-protein coupled receptor 1 family. Opsin subfamily. In terms of processing, phosphorylated on some or all of the serine and threonine residues present in the C-terminal region.

The protein localises to the membrane. In terms of biological role, visual pigments are the light-absorbing molecules that mediate vision. They consist of an apoprotein, opsin, covalently linked to cis-retinal. This chain is Opsin Rh4 (Rh4), found in Drosophila melanogaster (Fruit fly).